Here is a 226-residue protein sequence, read N- to C-terminus: MNSFPAQNLMLSATNANKDSGLRTSNAHWLHSCIAVPKTTGIDLSQEPPAEGVMVPQSHLFPPPIRDSRNDTETVKQKSVNQSPSKALKPKPQRKKRSVSNKSKKTPSIPETKREKKNLDINIDISSFDTSGVPPPVCSCTGVSRVCYKWGMGGWQSSCCTISISTYPLPMSTTRPGARLAGRKMSNGAYVKLLARLADEGYDLSHPLDLKNHWARHGTNKFVTIK.

Residues Ile42 to Lys116 form a disordered region. Residues Arg66 to Lys76 show a composition bias toward basic and acidic residues. Residues Leu88 to Lys105 are compositionally biased toward basic residues.

This sequence belongs to the BBR/BPC family. In terms of tissue distribution, expressed in seedlings, leaves and pistils. Detected in anthers, in pollen grains, in young rosette, in leaf vasculature, in the lateral and primary roots, in embryo sac, and in the whole ovule.

The protein localises to the nucleus. In terms of biological role, transcriptional regulator that specifically binds to GA-rich elements (GAGA-repeats) present in regulatory sequences of genes involved in developmental processes. The chain is Protein BASIC PENTACYSTEINE7 (BPC7) from Arabidopsis thaliana (Mouse-ear cress).